Reading from the N-terminus, the 140-residue chain is uncharacterized protein (140 aa).

The signal sequence occupies residues Met1–Ala22.

This is an uncharacterized protein from Archaeoglobus fulgidus (strain ATCC 49558 / DSM 4304 / JCM 9628 / NBRC 100126 / VC-16).